The sequence spans 519 residues: Ribonuclease Y (519 aa).

Residues 6 to 26 (VPFYLLIFLVGIGLGVLTFWA) form a helical membrane-spanning segment. One can recognise a KH domain in the interval 209-272 (TVCTVTIPNE…HIAKMALTEL (64 aa)). In terms of domain architecture, HD spans 335–428 (VLDHSLEVSH…CSAADAISAS (94 aa)).

Belongs to the RNase Y family.

It localises to the cell membrane. Its function is as follows. Endoribonuclease that initiates mRNA decay. The sequence is that of Ribonuclease Y from Protochlamydia amoebophila (strain UWE25).